We begin with the raw amino-acid sequence, 1348 residues long: Phosphoribosylformylglycinamidine synthase (1348 aa).

ATP contacts are provided by residues Gly300–Asp311 and Ala701. Residues Asp702, Glu741, Asn745, and Asp941 each contribute to the Mg(2+) site. Ser943 is a binding site for ATP. The Glutamine amidotransferase type-1 domain occupies Val1099 to Gly1348. Cys1192 serves as the catalytic Nucleophile. Residues His1313 and Glu1315 contribute to the active site.

It in the N-terminal section; belongs to the FGAMS family. Monomer.

It is found in the cytoplasm. It catalyses the reaction N(2)-formyl-N(1)-(5-phospho-beta-D-ribosyl)glycinamide + L-glutamine + ATP + H2O = 2-formamido-N(1)-(5-O-phospho-beta-D-ribosyl)acetamidine + L-glutamate + ADP + phosphate + H(+). The protein operates within purine metabolism; IMP biosynthesis via de novo pathway; 5-amino-1-(5-phospho-D-ribosyl)imidazole from N(2)-formyl-N(1)-(5-phospho-D-ribosyl)glycinamide: step 1/2. Its function is as follows. Phosphoribosylformylglycinamidine synthase involved in the purines biosynthetic pathway. Catalyzes the ATP-dependent conversion of formylglycinamide ribonucleotide (FGAR) and glutamine to yield formylglycinamidine ribonucleotide (FGAM) and glutamate. The protein is Phosphoribosylformylglycinamidine synthase of Xanthomonas campestris pv. campestris (strain ATCC 33913 / DSM 3586 / NCPPB 528 / LMG 568 / P 25).